We begin with the raw amino-acid sequence, 2325 residues long: Serine/threonine-protein kinase MEC1 (2325 aa).

An FAT domain is found at 1363-1886 (LLTTRSAECD…VWYIFSHARS (524 aa)). Residues 1993 to 2309 (FDDNVNIFFS…QVDVLIQEAT (317 aa)) form the PI3K/PI4K catalytic domain. Positions 1999 to 2005 (IFFSLQM) are G-loop. Residues 2174 to 2182 (GLGDRHCEN) form a catalytic loop region. The segment at 2194-2218 (HIDFDCLFEKGTTLPTPEIVPFRLT) is activation loop. In terms of domain architecture, FATC spans 2293–2325 (LPMNIHGQVDVLIQEATSLERLSQMYAGWAAYM).

The protein belongs to the PI3/PI4-kinase family. ATM subfamily.

It localises to the nucleus. It carries out the reaction L-seryl-[protein] + ATP = O-phospho-L-seryl-[protein] + ADP + H(+). The catalysed reaction is L-threonyl-[protein] + ATP = O-phospho-L-threonyl-[protein] + ADP + H(+). Serine/threonine protein kinase which activates checkpoint signaling upon genotoxic stresses such as ionizing radiation (IR), ultraviolet light (UV), or DNA replication stalling, thereby acting as a DNA damage sensor. Recognizes the substrate consensus sequence [ST]-Q. Recruited to DNA lesions in order to initiate the DNA repair by homologous recombination. Phosphorylates histone H2A to form H2AS128ph (gamma-H2A) at sites of DNA damage, also involved in the regulation of DNA damage response mechanism. Required for cell growth and meiotic recombination. This Candida albicans (strain SC5314 / ATCC MYA-2876) (Yeast) protein is Serine/threonine-protein kinase MEC1 (MEC1).